Here is a 220-residue protein sequence, read N- to C-terminus: Ribose-5-phosphate isomerase A (220 aa).

Substrate-binding positions include 28–31 (TGST), 81–84 (DGAD), and 94–97 (KGGG). Residue Glu-103 is the Proton acceptor of the active site. Substrate is bound at residue Lys-121.

Belongs to the ribose 5-phosphate isomerase family. Homodimer.

The catalysed reaction is aldehydo-D-ribose 5-phosphate = D-ribulose 5-phosphate. The protein operates within carbohydrate degradation; pentose phosphate pathway; D-ribose 5-phosphate from D-ribulose 5-phosphate (non-oxidative stage): step 1/1. In terms of biological role, catalyzes the reversible conversion of ribose-5-phosphate to ribulose 5-phosphate. In Shewanella sp. (strain W3-18-1), this protein is Ribose-5-phosphate isomerase A.